The primary structure comprises 255 residues: Folate receptor beta (255 aa).

The first 16 residues, 1-16 (MVWKWMPLLLLLVCVA), serve as a signal peptide directing secretion. Intrachain disulfides connect Cys-31–Cys-59, Cys-51–Cys-99, Cys-60–Cys-103, Cys-83–Cys-169, Cys-90–Cys-140, Cys-129–Cys-203, Cys-133–Cys-183, and Cys-146–Cys-163. Positions 97 and 101 each coordinate folate. An N-linked (GlcNAc...) asparagine glycan is attached at Asn-115. Residues 118 to 122 (WRKER), 151 to 156 (HRGWDW), and Ser-190 contribute to the folate site. The N-linked (GlcNAc...) asparagine glycan is linked to Asn-195. A lipid anchor (GPI-anchor amidated asparagine) is attached at Asn-230. A propeptide spans 231–255 (AGEMLHGTGGLLLSLALMLQLWLLG) (removed in mature form).

The protein belongs to the folate receptor family. N-glycosylated. Expressed in placenta and hematopoietic cells. Expression is increased in malignant tissues.

Its subcellular location is the cell membrane. The protein resides in the secreted. Binds to folate and reduced folic acid derivatives and mediates delivery of 5-methyltetrahydrofolate and folate analogs into the interior of cells. Has high affinity for folate and folic acid analogs at neutral pH. Exposure to slightly acidic pH after receptor endocytosis triggers a conformation change that strongly reduces its affinity for folates and mediates their release. In Homo sapiens (Human), this protein is Folate receptor beta (FOLR2).